A 202-amino-acid polypeptide reads, in one-letter code: Succinate dehydrogenase cytochrome b558 subunit (202 aa).

Helical transmembrane passes span 12–31 (LHSLLGVIPVGIFLIQHLVV), 60–79 (IFIIFLPLIYHAVYGVYIAF), 93–113 (NWLFVLQRVTGIITLIFVSWH), 135–155 (ILSSPAMLGFYIVGVLSTIFH), and 178–196 (ISTYVTLIIFVALSYVGLK). 4 residues coordinate heme: H28, H70, H113, and H155.

This sequence belongs to the cytochrome b558 family. In terms of assembly, part of an enzyme complex containing three subunits: a flavoprotein, an iron-sulfur protein and cytochrome b-558.

It localises to the cell membrane. It functions in the pathway carbohydrate metabolism; tricarboxylic acid cycle. Di-heme cytochrome of the succinate dehydrogenase complex. The polypeptide is Succinate dehydrogenase cytochrome b558 subunit (sdhC) (Bacillus subtilis (strain 168)).